The chain runs to 674 residues: Sodium/myo-inositol cotransporter 2 (674 aa).

Topologically, residues 1-27 (MESSTSSPQPPLSDPLDPFPQRSLEPG) are extracellular. A helical membrane pass occupies residues 28–48 (DIAVLVLYFLFVLAVGLWSTV). Residues 49–56 (KTKRDTVK) lie on the Cytoplasmic side of the membrane. Residues 57 to 77 (GYFLAGGDMVWWPVGASLFAS) traverse the membrane as a helical segment. At 78–102 (NVGSGHFVGLAGSGAATGISVAAYE) the chain is on the extracellular side. A helical membrane pass occupies residues 103–123 (FNGMFSVLMLAWIFLPIYIAG). Over 124 to 140 (QVTTMPEYLRRRFGGSR) the chain is Cytoplasmic. Residues 141 to 161 (IAITLAVLYLFIYIFTKISVD) form a helical membrane-spanning segment. Topologically, residues 162-180 (MYAGAIFIQQSLHLDLYLS) are extracellular. A helical transmembrane segment spans residues 181-201 (VVGLLAVTALYTVAGGLAAVI). Residues 202 to 208 (YTDALQT) lie on the Cytoplasmic side of the membrane. The chain crosses the membrane as a helical span at residues 209-229 (LIMLVGALTLMGYSFAAVGGM). The Extracellular segment spans residues 230–272 (EGLQEKYFLALPSNRSENSSCGLPREDAFHLFRDPLTSDLPWP). The helical transmembrane segment at 273-293 (GILFGMSIPSLWYWCTDQVIV) threads the bilayer. Topologically, residues 294–308 (QRSLAAKNLSHAKGG) are cytoplasmic. Residues 309-329 (SLMAAYLKVLPLFIMVFPGMV) traverse the membrane as a helical segment. At 330–375 (SRILFPDQVACADPETCQRVCNNPSGCSDIAYPKLVLELLPTGLRG) the chain is on the extracellular side. A helical membrane pass occupies residues 376–396 (LMMAVMVAALMSSLTSIFNSA). Topologically, residues 397–418 (STIFTMDLWNHVRPRASEKELM) are cytoplasmic. Residues 419–439 (IVGRVFVLLLVLVSVLWIPVV) traverse the membrane as a helical segment. Topologically, residues 440-446 (QASQGGQ) are extracellular. Residues 447–467 (LFVYIQAISSYLQPPVAMVFV) traverse the membrane as a helical segment. The Cytoplasmic portion of the chain corresponds to 468–479 (LGCFWKRANEKG). Residues 480-500 (AFWGLVLGLLLGFIRLILDFI) traverse the membrane as a helical segment. Residues 501–521 (YVEPACHQPDERPSVVKNVHY) lie on the Extracellular side of the membrane. A helical membrane pass occupies residues 522–542 (LYFSMILSSVTVLTVTVMSLL). Residues 543–653 (TEPPSKEMIS…SIEENPVVKT (111 aa)) are Cytoplasmic-facing. Residues 654 to 674 (LLDVNCLLCICCAFFLWGYFA) form a helical membrane-spanning segment.

It belongs to the sodium:solute symporter (SSF) (TC 2.A.21) family. Expressed in brain, lung and kidney. In the kidney, strongly expressed in the cortex, at the luminal side of proximal convoluted tubules and in BBMVs. Weaker expression observed in the medulla (at protein level).

It is found in the membrane. The protein resides in the apical cell membrane. The enzyme catalyses myo-inositol(out) + 2 Na(+)(out) = myo-inositol(in) + 2 Na(+)(in). The catalysed reaction is 1D-chiro-inositol(out) + 2 Na(+)(out) = 1D-chiro-inositol(in) + 2 Na(+)(in). It catalyses the reaction D-glucose(out) + 2 Na(+)(out) = D-glucose(in) + 2 Na(+)(in). It carries out the reaction D-xylose(out) + 2 Na(+)(out) = D-xylose(in) + 2 Na(+)(in). Its activity is regulated as follows. MI transport activity stimulated five-fold under 24 hour hypertonic shock conditions. MI inward currents were gradually inhibited as increasing amounts of phlorizin were added to the superfusion medium. When sodium is replaced by potassium, MI uptake is dramatically reduced and in the presence of L-fucose or D-chiro-inositol (DCI), the specific accumulation of tracer amounts of MI is also reduced. Its function is as follows. Involved in the sodium-dependent cotransport of myo-inositol (MI) with a Na(+):MI stoichiometry of 2:1. Exclusively responsible for apical MI transport and absorption in intestine. Can also transport D-chiro-inositol (DCI) but not L-fucose. Exhibits stereospecific cotransport of both D-glucose and D-xylose. May induce apoptosis through the TNF-alpha, PDCD1 pathway. May play a role in the regulation of MI concentration in serum, involving reabsorption in at least the proximal tubule of the kidney. This is Sodium/myo-inositol cotransporter 2 from Oryctolagus cuniculus (Rabbit).